We begin with the raw amino-acid sequence, 330 residues long: Biotin synthase (330 aa).

Residues 53-276 (NNIRLNVLLS…VFPFKELRLS (224 aa)) enclose the Radical SAM core domain. [4Fe-4S] cluster is bound by residues C68, C72, and C75. [2Fe-2S] cluster is bound by residues C112, C144, C204, and R274.

Belongs to the radical SAM superfamily. Biotin synthase family. In terms of assembly, homodimer. [4Fe-4S] cluster serves as cofactor. Requires [2Fe-2S] cluster as cofactor.

It catalyses the reaction (4R,5S)-dethiobiotin + (sulfur carrier)-SH + 2 reduced [2Fe-2S]-[ferredoxin] + 2 S-adenosyl-L-methionine = (sulfur carrier)-H + biotin + 2 5'-deoxyadenosine + 2 L-methionine + 2 oxidized [2Fe-2S]-[ferredoxin]. The protein operates within cofactor biosynthesis; biotin biosynthesis; biotin from 7,8-diaminononanoate: step 2/2. Its function is as follows. Catalyzes the conversion of dethiobiotin (DTB) to biotin by the insertion of a sulfur atom into dethiobiotin via a radical-based mechanism. This Streptococcus agalactiae serotype III (strain NEM316) protein is Biotin synthase.